Here is a 222-residue protein sequence, read N- to C-terminus: Octanoyltransferase (222 aa).

Residues 34 to 214 (GEAPSTVLLL…EFRKHEEALV (181 aa)) enclose the BPL/LPL catalytic domain. Residues 72 to 79 (RGGKLTWH), 144 to 146 (AIG), and 157 to 159 (GVA) each bind substrate. The active-site Acyl-thioester intermediate is the C175.

It belongs to the LipB family.

It is found in the cytoplasm. The enzyme catalyses octanoyl-[ACP] + L-lysyl-[protein] = N(6)-octanoyl-L-lysyl-[protein] + holo-[ACP] + H(+). It participates in protein modification; protein lipoylation via endogenous pathway; protein N(6)-(lipoyl)lysine from octanoyl-[acyl-carrier-protein]: step 1/2. Its function is as follows. Catalyzes the transfer of endogenously produced octanoic acid from octanoyl-acyl-carrier-protein onto the lipoyl domains of lipoate-dependent enzymes. Lipoyl-ACP can also act as a substrate although octanoyl-ACP is likely to be the physiological substrate. The polypeptide is Octanoyltransferase (Pseudarthrobacter chlorophenolicus (strain ATCC 700700 / DSM 12829 / CIP 107037 / JCM 12360 / KCTC 9906 / NCIMB 13794 / A6) (Arthrobacter chlorophenolicus)).